A 1017-amino-acid chain; its full sequence is Semaphorin-6D (1017 aa).

The first 20 residues, 1 to 20, serve as a signal peptide directing secretion; the sequence is MRVFLLCAYILLLMISQLRA. Residues 21 to 606 lie on the Extracellular side of the membrane; the sequence is VSFPEDDEPL…GESNQMVHMN (586 aa). The Sema domain maps to 27–512; the sequence is DEPLNTVDYH…FSSCVIRIPL (486 aa). Asn51 is a glycosylation site (N-linked (GlcNAc...) asparagine). Cystine bridges form between Cys108–Cys118, Cys136–Cys145, Cys259–Cys370, and Cys284–Cys329. N-linked (GlcNAc...) asparagine glycosylation occurs at Asn283. 2 N-linked (GlcNAc...) asparagine glycosylation sites follow: Asn435 and Asn461. Intrachain disulfides connect Cys477-Cys506, Cys515-Cys533, Cys521-Cys568, and Cys525-Cys541. The PSI domain occupies 514 to 569; the sequence is RCERYGSCKKSCIASRDPYCGWLSQGSCGRVTPGMLAEGYEQDAEFGNTAHLGDCH. A helical membrane pass occupies residues 607 to 627; sequence VLITCVFAAFVLGAFIAGVAV. Topologically, residues 628-1017 are cytoplasmic; sequence YCYRDMFVRK…SVRPLNKYTY (390 aa). Ser667, Ser678, and Ser688 each carry phosphoserine. Disordered stretches follow at residues 688-719, 731-769, 783-818, and 873-912; these read SRKE…PTPE, AMKS…GHIP, TSFS…RSVD, and LYSP…HKNS. Thr717 carries the post-translational modification Phosphothreonine. The span at 734 to 749 shows a compositional bias: basic and acidic residues; sequence SHSEKAHGHGASRKET. Residues Ser875, Ser901, and Ser927 each carry the phosphoserine modification. Over residues 875–886 the composition is skewed to polar residues; that stretch reads SPPSTLPRNSPT. Positions 965 to 981 are enriched in polar residues; that stretch reads LQPSLSRQSSYTSNGTL. The disordered stretch occupies residues 965–1017; that stretch reads LQPSLSRQSSYTSNGTLPRTGLKRTPSLKPDVPPKPSFVPQTPSVRPLNKYTY.

The protein belongs to the semaphorin family.

The protein resides in the cell membrane. Functionally, shows growth cone collapsing activity on dorsal root ganglion (DRG) neurons in vitro. May be a stop signal for the DRG neurons in their target areas, and possibly also for other neurons. May also be involved in the maintenance and remodeling of neuronal connections. Ligand of TREM2 with PLXNA1 as coreceptor in dendritic cells, plays a role in the generation of immune responses and skeletal homeostasis. This Pongo abelii (Sumatran orangutan) protein is Semaphorin-6D (SEMA6D).